Here is a 234-residue protein sequence, read N- to C-terminus: Large ribosomal subunit protein uL3 (234 aa).

Residues 137–156 (AGHGVERKHRSPGSVGGCAT) form a disordered region.

It belongs to the universal ribosomal protein uL3 family. Part of the 50S ribosomal subunit. Forms a cluster with proteins L14 and L19.

Its function is as follows. One of the primary rRNA binding proteins, it binds directly near the 3'-end of the 23S rRNA, where it nucleates assembly of the 50S subunit. This Frankia alni (strain DSM 45986 / CECT 9034 / ACN14a) protein is Large ribosomal subunit protein uL3.